Reading from the N-terminus, the 267-residue chain is Eukaryotic translation initiation factor 3 subunit J (267 aa).

The interval 1–70 is disordered; that stretch reads MSWNDDDVFA…KDKKSSTDQV (70 aa). The segment covering 24–38 has biased composition (acidic residues); the sequence is WDAEEPIMESWDAEE. Basic and acidic residues predominate over residues 39–66; that stretch reads TPAKKETSPKPDSKKNAKKDSKKDKKSS. A coiled-coil region spans residues 192 to 220; it reads IESIRQSIATLNVLMKDKEREERRARLAK.

It belongs to the eIF-3 subunit J family. Component of the eukaryotic translation initiation factor 3 (eIF-3) complex.

The protein localises to the cytoplasm. Functionally, component of the eukaryotic translation initiation factor 3 (eIF-3) complex, which is involved in protein synthesis of a specialized repertoire of mRNAs and, together with other initiation factors, stimulates binding of mRNA and methionyl-tRNAi to the 40S ribosome. The eIF-3 complex specifically targets and initiates translation of a subset of mRNAs involved in cell proliferation. In Vanderwaltozyma polyspora (strain ATCC 22028 / DSM 70294 / BCRC 21397 / CBS 2163 / NBRC 10782 / NRRL Y-8283 / UCD 57-17) (Kluyveromyces polysporus), this protein is Eukaryotic translation initiation factor 3 subunit J.